The primary structure comprises 645 residues: Dictomallein-like protein (645 aa).

An N-terminal signal peptide occupies residues 1-13 (MKLSMVMVLLVLA). The segment at 19–55 (CGGNDDNNSERTHESGDSNGDVTTPDNDASSNDEDDA) is disordered. Residues 177–448 (PALHPELDLT…QRWVRNRARM (272 aa)) enclose the Peptidase M66 domain. H333 is a Zn(2+) binding site. E334 is a catalytic residue. Zn(2+) contacts are provided by H337 and H343.

The protein belongs to the dictomallein family. Zn(2+) is required as a cofactor.

The protein resides in the secreted. The protein is Dictomallein-like protein (dtmL) of Hahella chejuensis (strain KCTC 2396).